The sequence spans 766 residues: Serine/threonine-protein kinase tousled-like 1 (766 aa).

The tract at residues 1–198 is disordered; that stretch reads MSVQSSSGSL…PSPTALAFGD (198 aa). The span at 20–33 shows a compositional bias: low complexity; the sequence is STSPTPGSAAAARS. Position 38 is a phosphothreonine (T38). Over residues 43-64 the composition is skewed to basic and acidic residues; sequence RPREGAMDELHSLDPRRQELLE. Residues S54, S77, and S80 each carry the phosphoserine modification. Over residues 68-85 the composition is skewed to low complexity; that stretch reads TGVATGSTGSTGSCSVGA. The span at 87–103 shows a compositional bias: polar residues; that stretch reads ASTNNESSNHSFGSLGS. The span at 105–121 shows a compositional bias: basic and acidic residues; the sequence is SDKESETPEKKQSESSR. Phosphoserine occurs at positions 134, 159, 174, and 176. Residues 170–192 are compositionally biased toward low complexity; the sequence is SPQNSHSHSTPSSSVRPNSPSPT. The stretch at 229–280 forms a coiled coil; that stretch reads NQDLEKKEGRIDDLLRANCDLRRQIDDQQKLLEKYKERLNKCISMSKKLLIE. The tract at residues 344-381 is disordered; sequence KLLGKRKPPTANNSQAPATNSEAKQRKTKAVNGAENDP. Positions 353–365 are enriched in polar residues; sequence TANNSQAPATNSE. Positions 397 to 445 form a coiled coil; the sequence is HEQEEIFKLRLGHLKKEEAEIQAELERLERVRNLHIRELKRINNEDNSQ. The Protein kinase domain occupies 456–734; it reads YLLLHLLGRG…VHQLANDPYL (279 aa). ATP is bound by residues 462-470 and K485; that span reads LGRGGFSEV. Residue D586 is the Proton acceptor of the active site. S743 is modified (phosphoserine). The tract at residues 745–766 is disordered; sequence GNLHMSGLTATPTPPSSSIITY.

Belongs to the protein kinase superfamily. Ser/Thr protein kinase family. Heterodimer with TLK2. Mg(2+) serves as cofactor. As to expression, ubiquitously expressed in all tissues examined.

The protein resides in the nucleus. The enzyme catalyses L-seryl-[protein] + ATP = O-phospho-L-seryl-[protein] + ADP + H(+). It carries out the reaction L-threonyl-[protein] + ATP = O-phospho-L-threonyl-[protein] + ADP + H(+). Its activity is regulated as follows. Cell-cycle regulated, maximal activity in S-phase. Inactivated by phosphorylation at Ser-743, potentially by CHEK1. Rapidly and transiently inhibited by phosphorylation following the generation of DNA double-stranded breaks during S-phase. This is cell cycle checkpoint and ATM-pathway dependent and appears to regulate processes involved in chromatin assembly. Isoform 3 protects the cells from the ionizing radiation by facilitating the repair of DSBs. In vitro, phosphorylates histone H3 at 'Ser-10'. The sequence is that of Serine/threonine-protein kinase tousled-like 1 (Tlk1) from Mus musculus (Mouse).